The following is a 201-amino-acid chain: Recombination protein RecR (201 aa).

The C4-type zinc finger occupies 58–73; it reads CEQCASITDTCPCRIC. In terms of domain architecture, Toprim spans 81 to 178; the sequence is DKLCLVSEWD…ELSRLAQGIP (98 aa).

Belongs to the RecR family.

In terms of biological role, may play a role in DNA repair. It seems to be involved in an RecBC-independent recombinational process of DNA repair. It may act with RecF and RecO. This is Recombination protein RecR from Maridesulfovibrio salexigens (strain ATCC 14822 / DSM 2638 / NCIMB 8403 / VKM B-1763) (Desulfovibrio salexigens).